The primary structure comprises 282 residues: Probable xyloglucan endotransglucosylase/hydrolase protein 18 (282 aa).

Positions 1 to 26 are cleaved as a signal peptide; that stretch reads MKLSCGTSFAFLIMFLFAAQSMHVYA. Residues 27–218 form the GH16 domain; that stretch reads GSFHKDVQIH…WSKAPFTAFY (192 aa). The active-site Nucleophile is glutamate 104. Glutamate 108 (proton donor) is an active-site residue. Residue glutamate 108 participates in xyloglucan binding. Residue asparagine 112 is glycosylated (N-linked (GlcNAc...) asparagine). Residues 121–123, 131–133, 197–198, and glycine 202 each bind xyloglucan; these read HTN, DKE, and HW. An intrachain disulfide couples cysteine 226 to cysteine 235. Asparagine 238 carries N-linked (GlcNAc...) asparagine glycosylation. An intrachain disulfide couples cysteine 267 to cysteine 281. Xyloglucan is bound at residue arginine 272.

It belongs to the glycosyl hydrolase 16 family. XTH group 2 subfamily. Contains at least one intrachain disulfide bond essential for its enzymatic activity. As to expression, root specific.

Its subcellular location is the secreted. The protein resides in the cell wall. The protein localises to the extracellular space. It is found in the apoplast. It catalyses the reaction breaks a beta-(1-&gt;4) bond in the backbone of a xyloglucan and transfers the xyloglucanyl segment on to O-4 of the non-reducing terminal glucose residue of an acceptor, which can be a xyloglucan or an oligosaccharide of xyloglucan.. Functionally, catalyzes xyloglucan endohydrolysis (XEH) and/or endotransglycosylation (XET). Cleaves and religates xyloglucan polymers, an essential constituent of the primary cell wall, and thereby participates in cell wall construction of growing tissues. The protein is Probable xyloglucan endotransglucosylase/hydrolase protein 18 (XTH18) of Arabidopsis thaliana (Mouse-ear cress).